Reading from the N-terminus, the 379-residue chain is Leukocyte elastase inhibitor A (379 aa).

At Ser-300 the chain carries Phosphoserine. The CARD-binding motif (CBM) stretch occupies residues Glu-351–Pro-379.

It belongs to the serpin family. Ov-serpin subfamily. Monomer. Interacts (via C-terminus) with CASP1 and CASP4 (via CARD domain); these interactions regulate the activity of inflammatory caspases. Ubiquitous with higher expression in pancreas, spleen and bone marrow.

Its subcellular location is the secreted. The protein localises to the cytoplasm. It localises to the cytolytic granule. The protein resides in the early endosome. Functionally, neutrophil serine protease inhibitor that plays an essential role in the regulation of the innate immune response, inflammation and cellular homeostasis. Acts primarily to protect the cell from proteases released in the cytoplasm during stress or infection. These proteases are important in killing microbes but when released from granules, these potent enzymes also destroy host proteins and contribute to mortality. Regulates the activity of the neutrophil proteases elastase, cathepsin G, proteinase-3, chymase, chymotrypsin, and kallikrein-3. Also acts as a potent intracellular inhibitor of granzyme H. During inflammation, limits the activity of inflammatory caspases CASP1 and CASP4 by suppressing their caspase-recruitment domain (CARD) oligomerization and enzymatic activation. In addition, promotes the proliferation of beta-cells when secreted. The sequence is that of Leukocyte elastase inhibitor A (Serpinb1a) from Mus musculus (Mouse).